The chain runs to 428 residues: tRNA(Ile)-lysidine synthase (428 aa).

28 to 33 is a binding site for ATP; sequence SGGVDS.

It belongs to the tRNA(Ile)-lysidine synthase family.

The protein resides in the cytoplasm. It carries out the reaction cytidine(34) in tRNA(Ile2) + L-lysine + ATP = lysidine(34) in tRNA(Ile2) + AMP + diphosphate + H(+). Ligates lysine onto the cytidine present at position 34 of the AUA codon-specific tRNA(Ile) that contains the anticodon CAU, in an ATP-dependent manner. Cytidine is converted to lysidine, thus changing the amino acid specificity of the tRNA from methionine to isoleucine. The sequence is that of tRNA(Ile)-lysidine synthase from Streptococcus pyogenes serotype M6 (strain ATCC BAA-946 / MGAS10394).